A 150-amino-acid polypeptide reads, in one-letter code: Male-specific protein scotti (150 aa).

The interval 60–84 (PPMAVFPARGGPNGGPPRLRKKRSF) is disordered. The N-linked (GlcNAc...) asparagine glycan is linked to N131.

This sequence belongs to the male-specific scotti family.

Post-meiotically transcribed gene that has a role in late spermiogenesis; required for actin cone progression during spermatid individualization. The chain is Male-specific protein scotti from Drosophila yakuba (Fruit fly).